The following is a 156-amino-acid chain: uncharacterized protein (156 aa).

3 helical membrane-spanning segments follow: residues 42-59, 79-98, and 105-127; these read LLMM…MTTV, ASFL…LLLY, and SLGR…VLGI.

It localises to the cell membrane. This is an uncharacterized protein from Archaeoglobus fulgidus (strain ATCC 49558 / DSM 4304 / JCM 9628 / NBRC 100126 / VC-16).